A 432-amino-acid chain; its full sequence is Glutamate-1-semialdehyde 2,1-aminomutase 2 (432 aa).

K268 is subject to N6-(pyridoxal phosphate)lysine.

This sequence belongs to the class-III pyridoxal-phosphate-dependent aminotransferase family. HemL subfamily. Homodimer. It depends on pyridoxal 5'-phosphate as a cofactor.

It is found in the cytoplasm. The enzyme catalyses (S)-4-amino-5-oxopentanoate = 5-aminolevulinate. It participates in porphyrin-containing compound metabolism; protoporphyrin-IX biosynthesis; 5-aminolevulinate from L-glutamyl-tRNA(Glu): step 2/2. This chain is Glutamate-1-semialdehyde 2,1-aminomutase 2, found in Listeria monocytogenes serotype 4b (strain F2365).